The following is a 274-amino-acid chain: Dermonecrotic toxin SdSicTox-betaIIB1bxiii (274 aa).

The active site involves His-5. 2 residues coordinate Mg(2+): Glu-25 and Asp-27. His-41 functions as the Nucleophile in the catalytic mechanism. 2 disulfides stabilise this stretch: Cys-45/Cys-51 and Cys-47/Cys-190. Position 85 (Asp-85) interacts with Mg(2+).

Belongs to the arthropod phospholipase D family. Class II subfamily. Requires Mg(2+) as cofactor. Expressed by the venom gland.

The protein resides in the secreted. The enzyme catalyses an N-(acyl)-sphingosylphosphocholine = an N-(acyl)-sphingosyl-1,3-cyclic phosphate + choline. The catalysed reaction is an N-(acyl)-sphingosylphosphoethanolamine = an N-(acyl)-sphingosyl-1,3-cyclic phosphate + ethanolamine. It catalyses the reaction a 1-acyl-sn-glycero-3-phosphocholine = a 1-acyl-sn-glycero-2,3-cyclic phosphate + choline. It carries out the reaction a 1-acyl-sn-glycero-3-phosphoethanolamine = a 1-acyl-sn-glycero-2,3-cyclic phosphate + ethanolamine. In terms of biological role, dermonecrotic toxins cleave the phosphodiester linkage between the phosphate and headgroup of certain phospholipids (sphingolipid and lysolipid substrates), forming an alcohol (often choline) and a cyclic phosphate. This toxin acts on sphingomyelin (SM). It may also act on ceramide phosphoethanolamine (CPE), lysophosphatidylcholine (LPC) and lysophosphatidylethanolamine (LPE), but not on lysophosphatidylserine (LPS), and lysophosphatidylglycerol (LPG). It acts by transphosphatidylation, releasing exclusively cyclic phosphate products as second products. Induces dermonecrosis, hemolysis, increased vascular permeability, edema, inflammatory response, and platelet aggregation. This is Dermonecrotic toxin SdSicTox-betaIIB1bxiii from Sicarius cf. damarensis (strain GJB-2008) (Six-eyed sand spider).